A 442-amino-acid polypeptide reads, in one-letter code: MSLFGSANFGLPRLKPLPSKRSHVVSVLDIGSTKVVCMIGRLTPRAESQILPGRTHSIEVIGIGHQKSRGVKNGVIADLDAVESVVRLAVDAAERMAGLTIDSLIVNVSAGRLQSDVYTATIDLGGQEVEANDLKKVLAAAGHQSLRTDRAILHSLPTGFSLDGERGIRDPLAMFGDVLGVDMHVLTAERPALKNLELCVNRAHLSVEGMVATPYASGLAALVDDEVELGCAAIDMGGGTTTISVFAEGKLVHADAVGLGGHHVTTDLARGLSTRIEDAERLKVVHGSALPNSADERDIISVPPIGEDDRDQPTHVPRALVSRIVRARIEETLELIRDRIQRSGFSPIVGKRIVLTGGASQLTGLPEAARRILARNVRIGRPLGVSGLPAAAKGPAFSTAVGLMIYPQVADLETHAAGSGMFSTLGGNSRFARMGQWLKESF.

The protein belongs to the FtsA/MreB family. Self-interacts. Interacts with FtsZ.

Its subcellular location is the cell inner membrane. In terms of biological role, cell division protein that is involved in the assembly of the Z ring. May serve as a membrane anchor for the Z ring. The sequence is that of Cell division protein FtsA from Rhizobium meliloti (strain 1021) (Ensifer meliloti).